The sequence spans 166 residues: NAD(P)H-quinone oxidoreductase subunit I, chloroplastic (166 aa).

4Fe-4S ferredoxin-type domains lie at glycine 55–lysine 84 and leucine 95–glutamate 124. Positions 64, 67, 70, 74, 104, 107, 110, and 114 each coordinate [4Fe-4S] cluster.

This sequence belongs to the complex I 23 kDa subunit family. As to quaternary structure, NDH is composed of at least 16 different subunits, 5 of which are encoded in the nucleus. Requires [4Fe-4S] cluster as cofactor.

Its subcellular location is the plastid. The protein resides in the chloroplast thylakoid membrane. The enzyme catalyses a plastoquinone + NADH + (n+1) H(+)(in) = a plastoquinol + NAD(+) + n H(+)(out). It catalyses the reaction a plastoquinone + NADPH + (n+1) H(+)(in) = a plastoquinol + NADP(+) + n H(+)(out). Functionally, NDH shuttles electrons from NAD(P)H:plastoquinone, via FMN and iron-sulfur (Fe-S) centers, to quinones in the photosynthetic chain and possibly in a chloroplast respiratory chain. The immediate electron acceptor for the enzyme in this species is believed to be plastoquinone. Couples the redox reaction to proton translocation, and thus conserves the redox energy in a proton gradient. The chain is NAD(P)H-quinone oxidoreductase subunit I, chloroplastic from Parthenium hysterophorus (Santa Maria feverfew).